A 487-amino-acid polypeptide reads, in one-letter code: Cytochrome P450 monooxygenase pyvB (487 aa).

The helical transmembrane segment at 17 to 37 (PAYSSVVIGALVVCLVCLVWP) threads the bilayer. Cysteine 426 serves as a coordination point for heme.

The protein belongs to the cytochrome P450 family. Heme serves as cofactor.

It is found in the membrane. The protein operates within secondary metabolite biosynthesis. Functionally, cytochrome P450 monooxygenase; part of the gene cluster that mediates the biosynthesis of pyranoviolin A, a pyranonigrin analog with a C-3 methoxy group. Initially, the PKS portion of pyvA synthesizes C-10 carbon chain from 5 molecules of malonyl-CoA, which is then condensed with the thiolation (T) domain-bound glycine activated by the adenylation (A) domain. The subsequent chain release by Dieckmann condensation (DKC) could be catalyzed by the TE domain present at the C-terminus of pyvA and/or the alpha/beta hydrolase pyvD, installing the tetramic acid moiety. The FAD-dependent monooxygenase pyvC next epoxidizes one of the olefins of the polyketide part, and the epoxide ring-opening induces the dihydro-gamma-pyrone ring formation. The cytochrome P450 monooxygeanse pyvB would be responsible for the 2 consecutive reactions, in which the dihydro-gamma-pyrone is oxidized to gamma-pyrone and C-7 is hydroxylated to yield pyranonigrin F. Finally, the O-methyltransferase pyvH methylates the C-3 hydroxy group to complete the biosynthesis. The chain is Cytochrome P450 monooxygenase pyvB from Aspergillus violaceofuscus (strain CBS 115571).